The chain runs to 440 residues: Proline--tRNA ligase (440 aa).

This sequence belongs to the class-II aminoacyl-tRNA synthetase family. ProS type 2 subfamily. As to quaternary structure, homodimer.

Its subcellular location is the cytoplasm. It carries out the reaction tRNA(Pro) + L-proline + ATP = L-prolyl-tRNA(Pro) + AMP + diphosphate. Functionally, catalyzes the attachment of proline to tRNA(Pro) in a two-step reaction: proline is first activated by ATP to form Pro-AMP and then transferred to the acceptor end of tRNA(Pro). In Rhizobium leguminosarum bv. trifolii (strain WSM2304), this protein is Proline--tRNA ligase.